Here is a 446-residue protein sequence, read N- to C-terminus: Histidine--tRNA ligase (446 aa).

The protein belongs to the class-II aminoacyl-tRNA synthetase family. In terms of assembly, homodimer.

The protein localises to the cytoplasm. It catalyses the reaction tRNA(His) + L-histidine + ATP = L-histidyl-tRNA(His) + AMP + diphosphate + H(+). In Burkholderia pseudomallei (strain 1710b), this protein is Histidine--tRNA ligase.